The chain runs to 615 residues: Elongation factor 4 (615 aa).

Residues Ala-17–Val-198 form the tr-type G domain. GTP is bound by residues Asp-29 to Thr-34 and Asn-145 to Asp-148.

This sequence belongs to the TRAFAC class translation factor GTPase superfamily. Classic translation factor GTPase family. LepA subfamily.

The protein localises to the cell membrane. The enzyme catalyses GTP + H2O = GDP + phosphate + H(+). In terms of biological role, required for accurate and efficient protein synthesis under certain stress conditions. May act as a fidelity factor of the translation reaction, by catalyzing a one-codon backward translocation of tRNAs on improperly translocated ribosomes. Back-translocation proceeds from a post-translocation (POST) complex to a pre-translocation (PRE) complex, thus giving elongation factor G a second chance to translocate the tRNAs correctly. Binds to ribosomes in a GTP-dependent manner. The polypeptide is Elongation factor 4 (Clavibacter michiganensis subsp. michiganensis (strain NCPPB 382)).